The chain runs to 213 residues: N-(5'-phosphoribosyl)anthranilate isomerase (213 aa).

This sequence belongs to the TrpF family.

The catalysed reaction is N-(5-phospho-beta-D-ribosyl)anthranilate = 1-(2-carboxyphenylamino)-1-deoxy-D-ribulose 5-phosphate. The protein operates within amino-acid biosynthesis; L-tryptophan biosynthesis; L-tryptophan from chorismate: step 3/5. This Caulobacter sp. (strain K31) protein is N-(5'-phosphoribosyl)anthranilate isomerase.